Consider the following 160-residue polypeptide: UPF0178 protein BB1267 (160 aa).

This sequence belongs to the UPF0178 family.

The protein is UPF0178 protein BB1267 of Bordetella bronchiseptica (strain ATCC BAA-588 / NCTC 13252 / RB50) (Alcaligenes bronchisepticus).